Consider the following 692-residue polypeptide: MESRREKNPMTEEESDGLIAARRIQRLSLHLSPSLTPSPSLPLVQTETCSARSKKLDVNGEALSLYMRGKHIDIQEKIFDFFNSRPDLQTPIEISKDDHRELCMNQLIGLVREAGVRPFRYVADDPEKYFAIMEAVGSVDMSLGIKMGVQYSLWGGSVINLGTKKHRDKYFDGIDNLDYTGCFAMTELHHGSNVQGLQTTATFDPLKDEFVIDTPNDGAIKWWIGNAAVHGKFATVFARLILPTHDSKGVSDMGVHAFIVPIRDMKTHQTLPGVEIQDCGHKVGLNGVDNGALRFRSVRIPRDNLLNRFGDVSRDGTYTSSLPTINKRFGATLGELVGGRVGLAYASVGVLKISATIAIRYSLLRQQFGPPKQPEVSILDYQSQQHKLMPMLASTYAYHFATVYLVEKYSEMKKTHDEQLVADVHALSAGLKSYVTSYTAKALSVCREACGGHGYAAVNRFGSLRNDHDIFQTFEGDNTVLLQQVAADLLKRYKEKFQGGTLTVTWSYLRESMNTYLSQPNPVTARWEGEDHLRDPKFQLDAFRYRTSRLLQNVAARLQKHSKTLGGFGAWNRCLNHLLTLAESHIETVILAKFIEAVKNCPDPSAKAALKLACDLYALDRIWKDIGTYRNVDYVAPNKAKAIHKLTEYLSFQVRNVAKELVDAFELPDHVTRAPIAMQSDAYSQYTQVVGF.

The transit peptide at 1 to 49 (MESRREKNPMTEEESDGLIAARRIQRLSLHLSPSLTPSPSLPLVQTETC) directs the protein to the peroxisome. FAD contacts are provided by Thr-186, Ser-192, Gly-225, Arg-365, Gln-384, Gly-452, and Thr-473. Residue Glu-475 is the Proton acceptor of the active site. Residue Asp-477 participates in FAD binding.

The protein belongs to the acyl-CoA oxidase family. Homodimer. FAD is required as a cofactor. Expressed mainly in flowers and young seedlings. Lower expression in roots, leaves and bracts.

Its subcellular location is the peroxisome. The catalysed reaction is a 2,3-saturated acyl-CoA + O2 = a (2E)-enoyl-CoA + H2O2. Functionally, catalyzes the desaturation of long-chain acyl-CoAs to 2-trans-enoyl-CoAs. Active on substrates longer than C14 and mostly with C18-CoA. Activity on long-chain mono-unsaturated substrates is double than with the corresponding saturated substrates. The chain is Acyl-coenzyme A oxidase 2, peroxisomal from Arabidopsis thaliana (Mouse-ear cress).